Here is a 396-residue protein sequence, read N- to C-terminus: Elongation factor Tu (396 aa).

In terms of domain architecture, tr-type G spans 10 to 206 (KPHVNIGTIG…AVDESVPDPI (197 aa)). The interval 19–26 (GHVDHGKT) is G1. Residue 19 to 26 (GHVDHGKT) participates in GTP binding. Residue Thr-26 participates in Mg(2+) binding. The interval 62-66 (GITIN) is G2. Residues 83-86 (DAPG) form a G3 region. Residues 83-87 (DAPGH) and 138-141 (NKSD) contribute to the GTP site. The tract at residues 138–141 (NKSD) is G4. The segment at 176–178 (SGL) is G5.

This sequence belongs to the TRAFAC class translation factor GTPase superfamily. Classic translation factor GTPase family. EF-Tu/EF-1A subfamily. In terms of assembly, monomer.

It localises to the cytoplasm. The catalysed reaction is GTP + H2O = GDP + phosphate + H(+). Its function is as follows. GTP hydrolase that promotes the GTP-dependent binding of aminoacyl-tRNA to the A-site of ribosomes during protein biosynthesis. The sequence is that of Elongation factor Tu from Renibacterium salmoninarum (strain ATCC 33209 / DSM 20767 / JCM 11484 / NBRC 15589 / NCIMB 2235).